The sequence spans 174 residues: Major allergen Can f 1 (174 aa).

The signal sequence occupies residues 1-18; that stretch reads MKTLLLTIGFSLIAILQA. C78 and C169 are joined by a disulfide. N80 carries an N-linked (GlcNAc...) asparagine glycan.

The protein belongs to the calycin superfamily. Lipocalin family. In terms of tissue distribution, tongue epithelial tissue.

The protein resides in the secreted. The sequence is that of Major allergen Can f 1 from Canis lupus familiaris (Dog).